Consider the following 159-residue polypeptide: MELNFMRILATIINFIILILILKHFFWDKIKRAIDARQEAIDETILKADEDAEKARRLRLDNERILKSAKEDGRKLREEQKKEADRIYKEIVDDAHREAESIINRANIEIQREEEKVKYELKQQVVDISVMLSEKALGESIDESKHRELINDFIEKVGI.

Residues 8–28 (ILATIINFIILILILKHFFWD) form a helical membrane-spanning segment.

The protein belongs to the ATPase B chain family. F-type ATPases have 2 components, F(1) - the catalytic core - and F(0) - the membrane proton channel. F(1) has five subunits: alpha(3), beta(3), gamma(1), delta(1), epsilon(1). F(0) has three main subunits: a(1), b(2) and c(10-14). The alpha and beta chains form an alternating ring which encloses part of the gamma chain. F(1) is attached to F(0) by a central stalk formed by the gamma and epsilon chains, while a peripheral stalk is formed by the delta and b chains.

Its subcellular location is the cell membrane. Its function is as follows. F(1)F(0) ATP synthase produces ATP from ADP in the presence of a proton or sodium gradient. F-type ATPases consist of two structural domains, F(1) containing the extramembraneous catalytic core and F(0) containing the membrane proton channel, linked together by a central stalk and a peripheral stalk. During catalysis, ATP synthesis in the catalytic domain of F(1) is coupled via a rotary mechanism of the central stalk subunits to proton translocation. Functionally, component of the F(0) channel, it forms part of the peripheral stalk, linking F(1) to F(0). This is ATP synthase subunit b from Clostridium perfringens (strain SM101 / Type A).